A 76-amino-acid chain; its full sequence is Acyl carrier protein (76 aa).

Residues 1-76 (MSIEERVKKI…SAIDYVQNNQ (76 aa)) form the Carrier domain. Residue Ser-36 is modified to O-(pantetheine 4'-phosphoryl)serine.

The protein belongs to the acyl carrier protein (ACP) family. 4'-phosphopantetheine is transferred from CoA to a specific serine of apo-ACP by AcpS. This modification is essential for activity because fatty acids are bound in thioester linkage to the sulfhydryl of the prosthetic group.

It is found in the cytoplasm. It functions in the pathway lipid metabolism; fatty acid biosynthesis. Functionally, carrier of the growing fatty acid chain in fatty acid biosynthesis. In Actinobacillus succinogenes (strain ATCC 55618 / DSM 22257 / CCUG 43843 / 130Z), this protein is Acyl carrier protein.